Consider the following 253-residue polypeptide: Imidazole glycerol phosphate synthase subunit HisF (253 aa).

Active-site residues include Asp13 and Asp132.

It belongs to the HisA/HisF family. Heterodimer of HisH and HisF.

The protein localises to the cytoplasm. It catalyses the reaction 5-[(5-phospho-1-deoxy-D-ribulos-1-ylimino)methylamino]-1-(5-phospho-beta-D-ribosyl)imidazole-4-carboxamide + L-glutamine = D-erythro-1-(imidazol-4-yl)glycerol 3-phosphate + 5-amino-1-(5-phospho-beta-D-ribosyl)imidazole-4-carboxamide + L-glutamate + H(+). It functions in the pathway amino-acid biosynthesis; L-histidine biosynthesis; L-histidine from 5-phospho-alpha-D-ribose 1-diphosphate: step 5/9. Functionally, IGPS catalyzes the conversion of PRFAR and glutamine to IGP, AICAR and glutamate. The HisF subunit catalyzes the cyclization activity that produces IGP and AICAR from PRFAR using the ammonia provided by the HisH subunit. In Aliarcobacter butzleri (strain RM4018) (Arcobacter butzleri), this protein is Imidazole glycerol phosphate synthase subunit HisF.